Reading from the N-terminus, the 187-residue chain is Peptide deformylase (187 aa).

Positions 96 and 138 each coordinate Fe cation. E139 is an active-site residue. Position 142 (H142) interacts with Fe cation.

It belongs to the polypeptide deformylase family. Requires Fe(2+) as cofactor.

The enzyme catalyses N-terminal N-formyl-L-methionyl-[peptide] + H2O = N-terminal L-methionyl-[peptide] + formate. Removes the formyl group from the N-terminal Met of newly synthesized proteins. Requires at least a dipeptide for an efficient rate of reaction. N-terminal L-methionine is a prerequisite for activity but the enzyme has broad specificity at other positions. In Brachyspira hyodysenteriae (strain ATCC 49526 / WA1), this protein is Peptide deformylase.